A 137-amino-acid polypeptide reads, in one-letter code: Putative pre-16S rRNA nuclease (137 aa).

It belongs to the YqgF nuclease family.

It is found in the cytoplasm. Functionally, could be a nuclease involved in processing of the 5'-end of pre-16S rRNA. This Flavobacterium psychrophilum (strain ATCC 49511 / DSM 21280 / CIP 103535 / JIP02/86) protein is Putative pre-16S rRNA nuclease.